Consider the following 907-residue polypeptide: Protein translocase subunit SecA (907 aa).

Residues Q87, 105 to 109 (GEGKT), and D512 each bind ATP. Residues 870 to 897 (AALAATQPQVREGEKVGRNDPCPCGSGK) are disordered. Residues C891, C893, C902, and H903 each contribute to the Zn(2+) site.

This sequence belongs to the SecA family. As to quaternary structure, monomer and homodimer. Part of the essential Sec protein translocation apparatus which comprises SecA, SecYEG and auxiliary proteins SecDF-YajC and YidC. It depends on Zn(2+) as a cofactor.

It localises to the cell inner membrane. It is found in the cytoplasm. It carries out the reaction ATP + H2O + cellular proteinSide 1 = ADP + phosphate + cellular proteinSide 2.. Functionally, part of the Sec protein translocase complex. Interacts with the SecYEG preprotein conducting channel. Has a central role in coupling the hydrolysis of ATP to the transfer of proteins into and across the cell membrane, serving both as a receptor for the preprotein-SecB complex and as an ATP-driven molecular motor driving the stepwise translocation of polypeptide chains across the membrane. This chain is Protein translocase subunit SecA, found in Shewanella piezotolerans (strain WP3 / JCM 13877).